The chain runs to 166 residues: UPF0303 protein Avin_29320 (166 aa).

It belongs to the UPF0303 family.

This is UPF0303 protein Avin_29320 from Azotobacter vinelandii (strain DJ / ATCC BAA-1303).